The sequence spans 503 residues: 11-hydroxysugiol 20-monooxygenase (503 aa).

The chain crosses the membrane as a helical span at residues 2–22 (QVLIVASLAFLAAWLVYSRWS). C446 is a heme binding site.

It belongs to the cytochrome P450 family. Heme serves as cofactor. As to expression, highly expressed in roots.

The protein localises to the membrane. It catalyses the reaction 11-hydroxysugiol + reduced [NADPH--hemoprotein reductase] + O2 = 11,20-dihydroxysugiol + oxidized [NADPH--hemoprotein reductase] + H2O + H(+). The enzyme catalyses 11-hydroxyferruginol + reduced [NADPH--hemoprotein reductase] + O2 = 11,20-dihydroxyferruginol + oxidized [NADPH--hemoprotein reductase] + H2O + H(+). Its pathway is secondary metabolite biosynthesis; terpenoid biosynthesis. Monooxygenase that oxidizes 11-hydroxysugiol to produce 11,20-dihydroxysugiol. Can oxidize 11-hydroxyferruginol to produce 11,20-dihydroxyferruginol. These products are intermediates in tanshinone biosynthesis. The protein is 11-hydroxysugiol 20-monooxygenase of Salvia miltiorrhiza (Chinese sage).